The sequence spans 405 residues: MSSSVKTPALEELVPGSEEKPKGRSPLSWGSLFGHRSEKIVFAKSDGGTDENVLTVTITETTVIESDLGVWSSRALLYLTLWFFFSFCTLFLNKYILSLLGGEPSMLGAVQMLSTTVIGCVKTLVPCCLYQHKARLSYPPNFLMTMLFVGLMRFATVVLGLVSLKNVAVSFAETVKSSAPIFTVIMSRMILGEYTGLLVNLSLIPVMGGLALCTATEISFNVLGFSAALSTNIMDCLQNVFSKKLLSGDKYRFSAPELQFYTSAAAVAMLVPARVFFTDVPVIGRSGKSFSYNQDVVLLLLTDGVLFHLQSVTAYALMGKISPVTFSVASTVKHALSIWLSVIVFGNKITSLSAVGTALVTVGVLLYNKARQHQQEALQSLAAATGRAPDDTVEPLLPQDPRQHP.

Positions methionine 1–serine 28 are disordered. 10 helical membrane passes run leucine 81 to glycine 101, methionine 106 to proline 126, phenylalanine 142 to valine 162, valine 167 to serine 187, threonine 195 to alanine 215, serine 219 to phenylalanine 241, alanine 264 to glycine 284, valine 296 to alanine 316, phenylalanine 326 to glycine 346, and asparagine 347 to tyrosine 367. Positions serine 380 to proline 405 are disordered.

The protein belongs to the TPT transporter family. SLC35E subfamily.

It is found in the membrane. Its function is as follows. Putative transporter. In Homo sapiens (Human), this protein is Solute carrier family 35 member E2B (SLC35E2B).